We begin with the raw amino-acid sequence, 343 residues long: Dihydroorotate dehydrogenase (quinone) (343 aa).

FMN is bound by residues 61–65 and T85; that span reads AGLDK. Substrate is bound at residue K65. 110-114 is a substrate binding site; the sequence is NRMGF. N138 and N171 together coordinate FMN. N171 is a binding site for substrate. S174 acts as the Nucleophile in catalysis. N176 contacts substrate. 2 residues coordinate FMN: K216 and T244. A substrate-binding site is contributed by 245–246; it reads NT. FMN-binding positions include G267, G296, and 317 to 318; that span reads YS.

It belongs to the dihydroorotate dehydrogenase family. Type 2 subfamily. Monomer. FMN serves as cofactor.

It localises to the cell membrane. The catalysed reaction is (S)-dihydroorotate + a quinone = orotate + a quinol. It functions in the pathway pyrimidine metabolism; UMP biosynthesis via de novo pathway; orotate from (S)-dihydroorotate (quinone route): step 1/1. Its function is as follows. Catalyzes the conversion of dihydroorotate to orotate with quinone as electron acceptor. The polypeptide is Dihydroorotate dehydrogenase (quinone) (Pseudomonas syringae pv. syringae (strain B728a)).